The sequence spans 255 residues: Glutamate racemase (255 aa).

Substrate contacts are provided by residues 7–8 (DS) and 39–40 (YG). The Proton donor/acceptor role is filled by Cys70. Residue 71–72 (NT) coordinates substrate. The Proton donor/acceptor role is filled by Cys181. Residue 182-183 (TH) coordinates substrate.

Belongs to the aspartate/glutamate racemases family.

It carries out the reaction L-glutamate = D-glutamate. The protein operates within cell wall biogenesis; peptidoglycan biosynthesis. Provides the (R)-glutamate required for cell wall biosynthesis. This chain is Glutamate racemase, found in Helicobacter pylori (strain HPAG1).